Reading from the N-terminus, the 231-residue chain is Trypsin-2 (231 aa).

A signal peptide spans 1-4 (AAFA). Positions 5–9 (TEDDK) are cleaved as a propeptide — activation peptide. A Peptidase S1 domain is found at 10-229 (IVGGYECKAY…FNDWLTSTMA (220 aa)). Disulfide bonds link Cys-16/Cys-145, Cys-34/Cys-50, Cys-118/Cys-218, Cys-125/Cys-191, Cys-156/Cys-170, and Cys-181/Cys-205. His-49 (charge relay system) is an active-site residue. Ca(2+) is bound by residues Glu-61, Asn-63, Val-66, and Glu-71. Asp-93 serves as the catalytic Charge relay system. Ser-185 acts as the Charge relay system in catalysis.

It belongs to the peptidase S1 family. Ca(2+) is required as a cofactor.

The protein localises to the secreted. Its subcellular location is the extracellular space. It catalyses the reaction Preferential cleavage: Arg-|-Xaa, Lys-|-Xaa.. The protein is Trypsin-2 of Salmo salar (Atlantic salmon).